A 517-amino-acid polypeptide reads, in one-letter code: Membrane-bound lytic murein transglycosylase F (517 aa).

Residues 1-32 (MKKFKINYLLIGIVTLLLAAALWPSIPWFGKA) form the signal peptide. Residues 33–269 (ENRIAAIQSR…RLEEKYLGHG (237 aa)) form a non-LT domain region. Residues 270–517 (GDFDYVDTRS…PNTLVQAPRR (248 aa)) are LT domain. The active site involves Glu-314.

It in the N-terminal section; belongs to the bacterial solute-binding protein 3 family. In the C-terminal section; belongs to the transglycosylase Slt family.

The protein localises to the cell outer membrane. It catalyses the reaction Exolytic cleavage of the (1-&gt;4)-beta-glycosidic linkage between N-acetylmuramic acid (MurNAc) and N-acetylglucosamine (GlcNAc) residues in peptidoglycan, from either the reducing or the non-reducing ends of the peptidoglycan chains, with concomitant formation of a 1,6-anhydrobond in the MurNAc residue.. Its function is as follows. Murein-degrading enzyme that degrades murein glycan strands and insoluble, high-molecular weight murein sacculi, with the concomitant formation of a 1,6-anhydromuramoyl product. Lytic transglycosylases (LTs) play an integral role in the metabolism of the peptidoglycan (PG) sacculus. Their lytic action creates space within the PG sacculus to allow for its expansion as well as for the insertion of various structures such as secretion systems and flagella. In Enterobacter sp. (strain 638), this protein is Membrane-bound lytic murein transglycosylase F.